The following is a 258-amino-acid chain: Clathrin light chain 3 (258 aa).

Positions 1 to 18 (MSSTLSNEESGLGDSNRS) are enriched in polar residues. The disordered stretch occupies residues 1-96 (MSSTLSNEES…PPPSAMEKEE (96 aa)). An N-acetylserine modification is found at Ser-2. The span at 34–50 (SRFQSQRFDSSFSNFDS) shows a compositional bias: low complexity. Positions 66-79 (RPETQSPPSINSFD) are enriched in polar residues. Residues 90–152 (SAMEKEEGFA…TIENNKKLNR (63 aa)) are involved in binding clathrin heavy chain. Positions 105–164 (RLNALRLEEKEKEEKEMVQQILEAAEQYKAEFYSKRNVTIENNKKLNREKEKFFLENQEK) form a coiled coil. Over residues 224–234 (LKHNPPTHMKP) the composition is skewed to basic residues. A disordered region spans residues 224 to 258 (LKHNPPTHMKPKLPSPSGADPNVSVSEQVTVTEKL). Residues 246–258 (VSVSEQVTVTEKL) are compositionally biased toward polar residues.

The protein belongs to the clathrin light chain family. In terms of assembly, clathrin coats are formed from molecules containing 3 heavy chains and 3 light chains.

The protein localises to the cytoplasmic vesicle membrane. Its subcellular location is the membrane. The protein resides in the coated pit. Functionally, clathrin is the major protein of the polyhedral coat of coated pits and vesicles. The protein is Clathrin light chain 3 of Arabidopsis thaliana (Mouse-ear cress).